The primary structure comprises 2622 residues: Ankyrin-3 (2622 aa).

The interval 1-44 (MAHAASQLKKNRDLEINAEEETEKKKKHRKRSRDRKKKSDANAS) is disordered. Positions 25-38 (KKKHRKRSRDRKKK) are enriched in basic residues. Serine 39 carries the post-translational modification Phosphoserine. ANK repeat units follow at residues 73-102 (NGLNALHLASKEGHVEVVSELLQREANVDA), 106-135 (KGNTALHIASLAGQAEVVKVLVTNGANVNA), 139-168 (NGFTPLYMAAQENHLEVVRFLLDNGASQSL), 172-201 (DGFTPLAVALQQGHDQVVSLLLENDTKGKV), 203-230 (LPALHIAARKDDTKAAALLLQNDTNADI), 242-271 (SGFTPLHIAAHYGNINVATLLLNRAAAVDF), 275-304 (NDITPLHVASKRGNANMVKLLLDRGAKIDA), 308-337 (DGLTPLHCGARSGHEQVVEMLLDRAAPILS), 341-370 (NGLSPLHMATQGDHLNCVQLLLQHNVPVDD), 374-403 (DYLTALHVAAHCGHYKVAKVLLDKKANPNA), 407-436 (NGFTPLHIACKKNRIRVMELLLKHGASIQA), 440-469 (SGLTPIHVAAFMGHVNIVSQLMHHGASPNT), 473-502 (RGETALHMAARSGQAEVVRYLVQDGAQVEA), 506-535 (DDQTPLHISARLGKADIVQQLLQQGASPNA), 539-568 (SGYTPLHLSAREGHEDVAAFLLDHGASLSI), 572-601 (KGFTPLHVAAKYGKLEVASLLLQKSASPDA), 605-634 (SGLTPLHVAAHYDNQKVALLLLDQGASPHA), 638-667 (NGYTPLHIAAKKNQMDIATSLLEYGADANA), 671-700 (QGIASVHLAAQEGHVDMVSLLLSRNANVNL), 704-733 (SGLTPLHLAAQEDRVNVAEVLVNQGAHVDA), 737-766 (MGYTPLHVGCHYGNIKIVNFLLQHSAKVNA), 770-799 (NGYTPLHQAAQQGHTHIINVLLQNNASPNE), and 803-832 (NGNTALAIARRLGYISVVDTLKVVTEEIMT). Serine 631 bears the Phosphoserine mark. Residues valine 851, serine 855, serine 869, serine 875, serine 921, serine 924, serine 930, serine 965, serine 967, and serine 1121 each carry the phosphoserine modification. The disordered stretch occupies residues 868–889 (LSDGEYISDGEEGEDAITGDTD). Acidic residues predominate over residues 873–884 (YISDGEEGEDAI). 2 ZU5 domains span residues 992–1147 (FLVS…VVSR) and 1149–1296 (KQES…LADC). A phosphoserine mark is found at serine 1458 and serine 1469. The interval 1510–1539 (TPITVPGPAKSGSLSSSPSNTPSASPLKSI) is disordered. Over residues 1515-1536 (PGPAKSGSLSSSPSNTPSASPL) the composition is skewed to low complexity. A phosphoserine mark is found at serine 1621, serine 1624, serine 1679, serine 1984, serine 2102, serine 2114, and serine 2117. Disordered regions lie at residues 1968 to 1992 (VESKGPPKSPKSDKGHSPEDDWTEF), 2099 to 2147 (ILES…FHEV), and 2292 to 2312 (SPDVAKSAAETSAQHAEKDNQ). Over residues 1977 to 1986 (PKSDKGHSPE) the composition is skewed to basic and acidic residues. Residues 2106–2127 (FSQHDQDKSPLSDSGFETRSEK) are compositionally biased toward basic and acidic residues. Residues 2128–2137 (TPSAPQSAES) are compositionally biased toward polar residues. The 85-residue stretch at 2336–2420 (TDIRMAIVAD…DIVTLLEGPI (85 aa)) folds into the Death domain. Serine 2457, serine 2475, and serine 2544 each carry phosphoserine. The tract at residues 2568 to 2622 (CVPVGMKKMTRTPADGKARLNLQEEEGSARSEPKQGEGYKVKTKKEIRNVEKKAH) is disordered. The span at 2594–2622 (GSARSEPKQGEGYKVKTKKEIRNVEKKAH) shows a compositional bias: basic and acidic residues.

As to quaternary structure, may be a constituent of a NFASC/NRCAM/ankyrin G complex. Interacts with RHBG. Directly interacts with DMD and betaDAG1; this interaction does not interfere with DMD-binding and is required for DMD and betaDAG1 retention at costameres. Interacts (via N-terminal ANK repeats) with SCHIP1 isoform 7 (via C-terminus); this interaction is required for the localization at axon initial segments (AISs) and nodes of Ranvier (NRs). Interacts with PLEC and FLNC. Interacts (via ANK repeats) with IQCJ-SCHIP1; required for IQCJ-SCHIP1 localization at axon initial segments (AIS) and nodes of Ranvier. Interacts with SCHIP1. Interacts with KCNA1; this inhibits channel activity. Interacts with SCN5A. Interacts with PKP2 and GJA1/CX43. In terms of assembly, interacts (via its C-terminal muscle-specific Obscurin/Titin-Binding-related domain sequence) with PLEC and FLNC. Expressed in the heart (at protein level). Expressed in skeletal muscle (at protein level). Expressed at highest levels in brain and testis, followed by skin, kidney, liver and spleen. As to expression, may be specifically expressed in muscle tissues, including heart and skeletal muscle (extensor digitorum longus) (at protein level). In terms of tissue distribution, expressed in skeletal muscle, brain, lung, heart, testes and kidney.

It localises to the cytoplasm. Its subcellular location is the cytoskeleton. The protein localises to the cell projection. The protein resides in the axon. It is found in the cell membrane. It localises to the sarcolemma. Its subcellular location is the postsynaptic cell membrane. The protein localises to the lysosome. The protein resides in the T-tubule. Functionally, membrane-cytoskeleton linker. May participate in the maintenance/targeting of ion channels and cell adhesion molecules at the nodes of Ranvier and axonal initial segments. In skeletal muscle, required for costamere localization of DMD and betaDAG1. Regulates KCNA1 channel activity in function of dietary Mg(2+) levels, and thereby contributes to the regulation of renal Mg(2+) reabsorption. Required for intracellular adhesion and junctional conductance in myocytes, potentially via stabilization of GJA1/CX43 protein abundance and promotion of PKP2, GJA1/CX43, and SCN5A/Nav1.5 localization to cell-cell junctions. This chain is Ankyrin-3 (Ank3), found in Rattus norvegicus (Rat).